Reading from the N-terminus, the 999-residue chain is Ulvan lyase, long isoform (999 aa).

An N-terminal signal peptide occupies residues 1 to 21; that stretch reads MKCLKTLLVSTTLLGAFSLNA. 126–127 contributes to the substrate binding site; the sequence is SH. The active-site Proton donor/acceptor is the H127. D189, D199, and K201 together coordinate Ca(2+). Substrate is bound by residues Y280 and R297. D300, D303, and Y305 together coordinate Ca(2+). Residue Y361 coordinates substrate.

It belongs to the polysaccharide lyase 24 family.

Its function is as follows. Ulvan lyase involved in ulvan degradation. Ulvan is the main polysaccharide component of the Ulvales (green seaweed) cell wall. It is composed of disaccharide building blocks comprising 3-sulfated rhamnose (Rha3S) linked to D-glucuronic acid (GlcA), L-iduronic acid (IduA), or D-xylose (Xyl). Ulvan lyase catalyzes preferentially the endolytic cleavage of the glycosidic bond between Rha3S and the uronic acid GlcA, but not IduA, producing oligosaccharides that have unsaturated 4-deoxy-L-threo-hex-4-enopyranosiduronic acid (deltaUA) at the non-reducing end. The most abundant end products in the degradation of the ulvan polysaccharide were deltaUA-Rha3S disaccharides and deltaUA-Rha3S-IduA-Rha3S and deltaUA-Rha3S-Xyl-Rha3S tetrasaccharides. The sequence is that of Ulvan lyase, long isoform from Alteromonas sp.